Consider the following 182-residue polypeptide: T-cell surface glycoprotein CD3 gamma chain (182 aa).

Residues 1 to 22 form the signal peptide; sequence MEQGKHLAGLILAITLLQGTMA. The Ig-like domain maps to 23–98; it reads QLKEGKHSVL…GSKENSKRLQ (76 aa). Residues 23–116 are Extracellular-facing; it reads QLKEGKHSVL…CIELNSATVS (94 aa). Cys46 and Cys87 are joined by a disulfide. Asn66 carries an N-linked (GlcNAc...) asparagine glycan. The helical transmembrane segment at 117–137 threads the bilayer; sequence GFIFTEIISLFFLAVGVYFIA. The Cytoplasmic segment spans residues 138 to 182; the sequence is GQDGVRQSRASDKQTLLSNDQLYQPLKDREDDQYSHLQGNNSRKN. Ser145 is modified (phosphoserine). Ser148 carries the post-translational modification Phosphoserine; by PKC. The ITAM domain occupies 149 to 177; the sequence is DKQTLLSNDQLYQPLKDREDDQYSHLQGN. Residues 153-154 carry the Di-leucine motif motif; sequence LL.

In terms of assembly, the TCR-CD3 complex is composed of a CD3D/CD3E and a CD3G/CD3E heterodimers that preferentially associate with TCRalpha and TCRbeta, respectively, to form TCRalpha/CD3E/CD3G and TCRbeta/CD3G/CD3E trimers. In turn, the hexamer interacts with CD3Z homodimer to form the TCR-CD3 complex. Alternatively, TCRalpha and TCRbeta can be replaced by TCRgamma and TCRdelta. Phosphorylated on Tyr residues after T-cell receptor triggering by LCK in association with CD4/CD8. Phosphorylated also by PKC; leading to the TCR complex down-regulation. Post-translationally, phosphorylated on Tyr residues after T-cell receptor triggering by LCK in association with CD4/CD8.

Its subcellular location is the cell membrane. Its function is as follows. Part of the TCR-CD3 complex present on T-lymphocyte cell surface that plays an essential role in adaptive immune response. When antigen presenting cells (APCs) activate T-cell receptor (TCR), TCR-mediated signals are transmitted across the cell membrane by the CD3 chains CD3D, CD3E, CD3G and CD3Z. All CD3 chains contain immunoreceptor tyrosine-based activation motifs (ITAMs) in their cytoplasmic domain. Upon TCR engagement, these motifs become phosphorylated by Src family protein tyrosine kinases LCK and FYN, resulting in the activation of downstream signaling pathways. In addition to this role of signal transduction in T-cell activation, CD3G plays an essential role in the dynamic regulation of TCR expression at the cell surface. Indeed, constitutive TCR cycling is dependent on the di-leucine-based (diL) receptor-sorting motif present in CD3G. This chain is T-cell surface glycoprotein CD3 gamma chain (CD3G), found in Sus scrofa (Pig).